Consider the following 556-residue polypeptide: MSMLKDPSQKYRPFPAINLPDRTWPSKTITEVPIWCSSDLRDGNQSLIEPMDAAKKMRFFKTLVQVGLKQIEVAFPSASDTDFNFVRELIEGNHIPDDVTIQVLTQAREDLITRTFESLRGAKKAIVHVYNATAPSFRRIVFNQDKQGVVDIATNAAKLIRKLAAEQPDTQWSFQYSPEIFSSTELEFSVEVCNAVIDVWQPTPEHKIILNLPATVECATPNVYADQIEWFGRHVNRRDSVIISLHTHNDRGTGVAATELGLMAGADRVEGCLFGNGERTGNVDLVTLALNMYTQGLHPQLDFSDIDAVRKVVEECNQLPVHPRHPYVGDLVHTAFSGSHQDAIRKGFAQQKEDAIWEVPYLPIDPADIGRDYEAVIRVNSQSGKGGITFLLEQEYGISLPRRMQIEFSQVVQGETDRLGLEMTAQQIYSLLENEYLKATSPYALASHRLQEENGTSAVDLEVTFDGEKQHWRGIGKGPLEALVAALPVKAEIMDYHEHAIGAGANARAAAYIEIRLEGQRPLHGIGIDENITTASFRALFSALNRAVTQAEAKAA.

The Pyruvate carboxyltransferase domain occupies Pro-33–Asp-307. Residues Asp-42, His-246, His-248, and Asn-282 each contribute to the Mg(2+) site. A regulatory domain region spans residues Ala-439–Ala-556.

The protein belongs to the alpha-IPM synthase/homocitrate synthase family. LeuA type 2 subfamily. In terms of assembly, homodimer. Mg(2+) is required as a cofactor.

It is found in the cytoplasm. The catalysed reaction is 3-methyl-2-oxobutanoate + acetyl-CoA + H2O = (2S)-2-isopropylmalate + CoA + H(+). Its pathway is amino-acid biosynthesis; L-leucine biosynthesis; L-leucine from 3-methyl-2-oxobutanoate: step 1/4. Its function is as follows. Catalyzes the condensation of the acetyl group of acetyl-CoA with 3-methyl-2-oxobutanoate (2-ketoisovalerate) to form 3-carboxy-3-hydroxy-4-methylpentanoate (2-isopropylmalate). In Pseudomonas paraeruginosa (strain DSM 24068 / PA7) (Pseudomonas aeruginosa (strain PA7)), this protein is 2-isopropylmalate synthase.